A 941-amino-acid chain; its full sequence is ATP-dependent 6-phosphofructokinase subunit beta (941 aa).

Residues 2-558 are N-terminal catalytic PFK domain 1; sequence PDASLFNGTS…HMKNFISTNS (557 aa). Residues Gly-191, 255–256, and 285–288 each bind ATP; these read RC and GDGS. Asp-286 contributes to the Mg(2+) binding site. Residues 331–333, Arg-368, 375–377, Glu-432, Arg-460, and 466–469 contribute to the beta-D-fructose 6-phosphate site; these read SID, MGR, and HVQR. The Proton acceptor role is filled by Asp-333. Residues 559–572 are interdomain linker; it reads ADHVPPSLPLEKRK. A C-terminal regulatory PFK domain 2 region spans residues 573 to 941; sequence KVAIINVGAP…SDMLSGRTSL (369 aa). Beta-D-fructose 2,6-bisphosphate-binding positions include Arg-643, 701–705, Arg-739, 746–748, Glu-806, Lys-832, 838–841, and Arg-918; these read TISNN, QGG, and HVQQ.

This sequence belongs to the phosphofructokinase type A (PFKA) family. ATP-dependent PFK group I subfamily. Eukaryotic two domain clade 'E' sub-subfamily. As to quaternary structure, heterododecamer of 4 alpha, 4 beta and 4 gamma chains. The gamma chain bridges the N-terminal halves of the alpha and beta subunits. The cofactor is Mg(2+).

Its subcellular location is the cytoplasm. The catalysed reaction is beta-D-fructose 6-phosphate + ATP = beta-D-fructose 1,6-bisphosphate + ADP + H(+). It participates in carbohydrate degradation; glycolysis; D-glyceraldehyde 3-phosphate and glycerone phosphate from D-glucose: step 3/4. With respect to regulation, allosterically activated by ADP, AMP, or fructose 2,6-bisphosphate, and allosterically inhibited by ATP or citrate. In terms of biological role, catalyzes the phosphorylation of D-fructose 6-phosphate to fructose 1,6-bisphosphate by ATP, the first committing step of glycolysis. In Komagataella phaffii (strain GS115 / ATCC 20864) (Yeast), this protein is ATP-dependent 6-phosphofructokinase subunit beta (PFK2).